The following is a 239-amino-acid chain: tRNA (guanine-N(7)-)-methyltransferase (239 aa).

S-adenosyl-L-methionine-binding residues include glutamate 69, glutamate 94, aspartate 121, and aspartate 144. The active site involves aspartate 144. Position 148 (lysine 148) interacts with substrate. Residues 150–155 form an interaction with RNA region; the sequence is RHNKRR. Substrate is bound by residues aspartate 180 and 217-220; that span reads TKFE.

This sequence belongs to the class I-like SAM-binding methyltransferase superfamily. TrmB family. Monomer.

The enzyme catalyses guanosine(46) in tRNA + S-adenosyl-L-methionine = N(7)-methylguanosine(46) in tRNA + S-adenosyl-L-homocysteine. Its pathway is tRNA modification; N(7)-methylguanine-tRNA biosynthesis. In terms of biological role, catalyzes the formation of N(7)-methylguanine at position 46 (m7G46) in tRNA. In Escherichia coli O6:H1 (strain CFT073 / ATCC 700928 / UPEC), this protein is tRNA (guanine-N(7)-)-methyltransferase.